The following is a 164-amino-acid chain: Nitric oxide synthase, inducible (164 aa).

Position 3 (phenylalanine 3) interacts with (6R)-L-erythro-5,6,7,8-tetrahydrobiopterin. Residue tyrosine 18 participates in heme b binding. A calmodulin-binding region spans residues phenylalanine 42 to lysine 62. In terms of domain architecture, Flavodoxin-like spans cysteine 66–phenylalanine 164. FMN contacts are provided by threonine 72, glutamate 73, threonine 74, lysine 76, serine 77, serine 118, threonine 119, serine 155, and cysteine 162.

This sequence belongs to the NOS family. Homodimer. Heme b is required as a cofactor. Requires FAD as cofactor. It depends on FMN as a cofactor. (6R)-L-erythro-5,6,7,8-tetrahydrobiopterin serves as cofactor.

The protein localises to the cytoplasm. Its subcellular location is the cytosol. It catalyses the reaction 2 L-arginine + 3 NADPH + 4 O2 + H(+) = 2 L-citrulline + 2 nitric oxide + 3 NADP(+) + 4 H2O. Not stimulated by calcium/calmodulin. Its function is as follows. Produces nitric oxide (NO) which is a messenger molecule with diverse functions throughout the body. In macrophages, NO mediates tumoricidal and bactericidal actions. Also has nitrosylase activity and mediates cysteine S-nitrosylation of cytoplasmic target proteins such COX2. This Carassius auratus (Goldfish) protein is Nitric oxide synthase, inducible (nos2).